We begin with the raw amino-acid sequence, 371 residues long: Chorismate synthase (371 aa).

Residues R48 and R54 each contribute to the NADP(+) site. FMN contacts are provided by residues 132-134 (RSS), 244-245 (NA), G289, 304-308 (KPTSS), and R330.

The protein belongs to the chorismate synthase family. In terms of assembly, homotetramer. The cofactor is FMNH2.

The enzyme catalyses 5-O-(1-carboxyvinyl)-3-phosphoshikimate = chorismate + phosphate. It functions in the pathway metabolic intermediate biosynthesis; chorismate biosynthesis; chorismate from D-erythrose 4-phosphate and phosphoenolpyruvate: step 7/7. Its function is as follows. Catalyzes the anti-1,4-elimination of the C-3 phosphate and the C-6 proR hydrogen from 5-enolpyruvylshikimate-3-phosphate (EPSP) to yield chorismate, which is the branch point compound that serves as the starting substrate for the three terminal pathways of aromatic amino acid biosynthesis. This reaction introduces a second double bond into the aromatic ring system. This chain is Chorismate synthase, found in Methylobacterium nodulans (strain LMG 21967 / CNCM I-2342 / ORS 2060).